The primary structure comprises 351 residues: Protein FAM118B (351 aa).

Alanine 2 carries the N-acetylalanine modification. Residue serine 9 is modified to Phosphoserine.

It belongs to the FAM118 family.

The protein resides in the nucleus. Its subcellular location is the cajal body. Its function is as follows. May play a role in Cajal bodies formation. In Homo sapiens (Human), this protein is Protein FAM118B (FAM118B).